Consider the following 67-residue polypeptide: ATP synthase F(0) complex subunit 8 (67 aa).

Residues 8 to 24 (TWLIMILSMILTLFITF) form a helical membrane-spanning segment. Residue lysine 54 is modified to N6-acetyllysine; alternate. Lysine 54 is modified (N6-succinyllysine; alternate). At lysine 57 the chain carries N6-acetyllysine.

Belongs to the ATPase protein 8 family. As to quaternary structure, component of the ATP synthase complex composed at least of ATP5F1A/subunit alpha, ATP5F1B/subunit beta, ATP5MC1/subunit c (homooctomer), MT-ATP6/subunit a, MT-ATP8/subunit 8, ATP5ME/subunit e, ATP5MF/subunit f, ATP5MG/subunit g, ATP5MK/subunit k, ATP5MJ/subunit j, ATP5F1C/subunit gamma, ATP5F1D/subunit delta, ATP5F1E/subunit epsilon, ATP5PF/subunit F6, ATP5PB/subunit b, ATP5PD/subunit d, ATP5PO/subunit OSCP. ATP synthase complex consists of a soluble F(1) head domain (subunits alpha(3) and beta(3)) - the catalytic core - and a membrane F(0) domain - the membrane proton channel (subunits c, a, 8, e, f, g, k and j). These two domains are linked by a central stalk (subunits gamma, delta, and epsilon) rotating inside the F1 region and a stationary peripheral stalk (subunits F6, b, d, and OSCP). Interacts with PRICKLE3.

It localises to the mitochondrion membrane. Functionally, subunit 8, of the mitochondrial membrane ATP synthase complex (F(1)F(0) ATP synthase or Complex V) that produces ATP from ADP in the presence of a proton gradient across the membrane which is generated by electron transport complexes of the respiratory chain. ATP synthase complex consist of a soluble F(1) head domain - the catalytic core - and a membrane F(1) domain - the membrane proton channel. These two domains are linked by a central stalk rotating inside the F(1) region and a stationary peripheral stalk. During catalysis, ATP synthesis in the catalytic domain of F(1) is coupled via a rotary mechanism of the central stalk subunits to proton translocation. In vivo, can only synthesize ATP although its ATP hydrolase activity can be activated artificially in vitro. Part of the complex F(0) domain. The sequence is that of ATP synthase F(0) complex subunit 8 from Phoca vitulina (Harbor seal).